Consider the following 294-residue polypeptide: Putative HTH-type transcriptional regulatory protein STK_12680 (294 aa).

The 53-residue stretch at 123-175 (LKKKREEMGLSLGEVAQALGVSRISIYDYEREDSYVSIDIAEKLVELFGDDIL) folds into the HTH cro/C1-type domain. A DNA-binding region (H-T-H motif) is located at residues 134–153 (LGEVAQALGVSRISIYDYER).

The chain is Putative HTH-type transcriptional regulatory protein STK_12680 from Sulfurisphaera tokodaii (strain DSM 16993 / JCM 10545 / NBRC 100140 / 7) (Sulfolobus tokodaii).